The primary structure comprises 229 residues: uncharacterized protein (229 aa).

Positions 1–102 (MKLLGRKKSY…AASKAQITDR (102 aa)) are disordered. Basic residues predominate over residues 73 to 94 (ARRKSLAPPKCHRAERRAKRAA). A run of 2 helical transmembrane segments spans residues 137–157 (LGLF…VPQL) and 159–179 (LYMS…GIIL).

It is found in the cell membrane. This is an uncharacterized protein from Mycobacterium leprae (strain TN).